The primary structure comprises 150 residues: Heat shock protein beta-3 (150 aa).

Positions 47–150 (KTRAAQSPPV…VEVKDPVGTK (104 aa)) constitute a sHSP domain.

This sequence belongs to the small heat shock protein (HSP20) family.

It localises to the cytoplasm. The protein localises to the nucleus. Inhibitor of actin polymerization. The polypeptide is Heat shock protein beta-3 (HSPB3) (Homo sapiens (Human)).